Consider the following 239-residue polypeptide: Pyridoxine 5'-phosphate synthase (239 aa).

Residue Asn-7 coordinates 3-amino-2-oxopropyl phosphate. 9-10 provides a ligand contact to 1-deoxy-D-xylulose 5-phosphate; that stretch reads DH. Position 18 (Arg-18) interacts with 3-amino-2-oxopropyl phosphate. The Proton acceptor role is filled by His-43. Residues Arg-45 and His-50 each coordinate 1-deoxy-D-xylulose 5-phosphate. Glu-70 serves as the catalytic Proton acceptor. Residue Thr-100 participates in 1-deoxy-D-xylulose 5-phosphate binding. The active-site Proton donor is His-191. 3-amino-2-oxopropyl phosphate contacts are provided by residues Gly-192 and 213-214; that span reads GH.

The protein belongs to the PNP synthase family. In terms of assembly, homooctamer; tetramer of dimers.

It localises to the cytoplasm. It catalyses the reaction 3-amino-2-oxopropyl phosphate + 1-deoxy-D-xylulose 5-phosphate = pyridoxine 5'-phosphate + phosphate + 2 H2O + H(+). The protein operates within cofactor biosynthesis; pyridoxine 5'-phosphate biosynthesis; pyridoxine 5'-phosphate from D-erythrose 4-phosphate: step 5/5. Its function is as follows. Catalyzes the complicated ring closure reaction between the two acyclic compounds 1-deoxy-D-xylulose-5-phosphate (DXP) and 3-amino-2-oxopropyl phosphate (1-amino-acetone-3-phosphate or AAP) to form pyridoxine 5'-phosphate (PNP) and inorganic phosphate. The protein is Pyridoxine 5'-phosphate synthase of Geotalea uraniireducens (strain Rf4) (Geobacter uraniireducens).